Reading from the N-terminus, the 25-residue chain is Cruzioseptin-13 (25 aa).

Residue Asn25 is modified to Asparagine amide.

As to expression, expressed by the skin glands.

It is found in the secreted. In terms of biological role, has antimicrobial activity. This is Cruzioseptin-13 from Cruziohyla calcarifer (Splendid leaf frog).